The chain runs to 606 residues: Ubiquitin carboxyl-terminal hydrolase 2 (606 aa).

Positions 1-201 (MSQLSSTLKR…RSEYLADYLE (201 aa)) are necessary for interaction with MDM4. Disordered regions lie at residues 53–112 (PSPP…GGSG) and 207–228 (ASAPQVPTPTPPSRAPEVLSPT). The span at 90–100 (KRAESQTRGTE) shows a compositional bias: basic and acidic residues. Residues 268 to 600 (AGLRNLGNTC…DAYLLFYELA (333 aa)) form the USP domain. C277 acts as the Nucleophile in catalysis. A necessary for interaction with MDM4 region spans residues 404 to 504 (YLEREDSRIG…FPKILVLHLK (101 aa)). Zn(2+) is bound by residues C426, C429, C477, and C480. H558 acts as the Proton acceptor in catalysis.

It belongs to the peptidase C19 family. USP2 subfamily. Homooligomer. Found in trimeric complex with MDM2 and MDM4 and USP2. Interacts with CCND1; the interaction is direct and promotes its stabilization by antagonizing ubiquitin-dependent degradation. Interacts (via N-terminus and C-terminus) with MDM2. Interacts with MDM4 and PER1. Interacts with KCNQ1; counteracts the NEDD4L-specific down-regulation of I(Ks) and restores plasma membrane localization of KCNQ1.

It localises to the cytoplasm. The protein localises to the perinuclear region. It catalyses the reaction Thiol-dependent hydrolysis of ester, thioester, amide, peptide and isopeptide bonds formed by the C-terminal Gly of ubiquitin (a 76-residue protein attached to proteins as an intracellular targeting signal).. Cleavage is inhibited by ubiquitin in a dosage-dependent manner. Cleavage is blocked by ubiquitin aldehyde. Functionally, hydrolase that deubiquitinates polyubiquitinated target proteins such as MDM2, MDM4 and CCND1. Possesses both ubiquitin-specific peptidase and isopeptidase activities. Deubiquitinates MDM2 without reversing MDM2-mediated p53/TP53 ubiquitination and thus indirectly promotes p53/TP53 degradation and limits p53 activity. Has no deubiquitinase activity against p53/TP53. Prevents MDM2-mediated degradation of MDM4. Plays a role in the G1/S cell-cycle progression in normal and cancer cells. Plays a role in the regulation of myogenic differentiation of embryonic muscle cells. Regulates the circadian clock by modulating its intrinsic circadian rhythm and its capacity to respond to external cues. Associates with clock proteins and deubiquitinates core clock component PER1 but does not affect its overall stability. Regulates the nucleocytoplasmic shuttling and nuclear retention of PER1 and its repressive role on the clock transcription factors CLOCK and BMAL1. This Bos taurus (Bovine) protein is Ubiquitin carboxyl-terminal hydrolase 2 (USP2).